The chain runs to 1339 residues: DNA-directed RNA polymerase subunit beta'' (1339 aa).

Zn(2+)-binding residues include cysteine 226, cysteine 299, cysteine 306, and cysteine 309.

It belongs to the RNA polymerase beta' chain family. RpoC2 subfamily. In terms of assembly, in plastids the minimal PEP RNA polymerase catalytic core is composed of four subunits: alpha, beta, beta', and beta''. When a (nuclear-encoded) sigma factor is associated with the core the holoenzyme is formed, which can initiate transcription. Zn(2+) is required as a cofactor.

It localises to the plastid. The protein resides in the chloroplast. It catalyses the reaction RNA(n) + a ribonucleoside 5'-triphosphate = RNA(n+1) + diphosphate. Its function is as follows. DNA-dependent RNA polymerase catalyzes the transcription of DNA into RNA using the four ribonucleoside triphosphates as substrates. The chain is DNA-directed RNA polymerase subunit beta'' from Cycas taitungensis (Prince sago).